Consider the following 301-residue polypeptide: Probable alpha-L-glutamate ligase (301 aa).

The region spanning 104-287 (LQLLARKGIG…VAGQLIDYIE (184 aa)) is the ATP-grasp domain. Residues lysine 141, 178–179 (EF), aspartate 187, and 211–213 (RSN) contribute to the ATP site. Mg(2+) contacts are provided by aspartate 248, glutamate 260, and asparagine 262. Positions 248, 260, and 262 each coordinate Mn(2+).

It belongs to the RimK family. Mg(2+) serves as cofactor. Requires Mn(2+) as cofactor.

The sequence is that of Probable alpha-L-glutamate ligase from Maridesulfovibrio salexigens (strain ATCC 14822 / DSM 2638 / NCIMB 8403 / VKM B-1763) (Desulfovibrio salexigens).